The chain runs to 221 residues: Stromal cell-derived factor 2-like protein 1 (221 aa).

Positions 1–28 (MWSAGRGGAAWPVLLGLLLALLVPGGGA) are cleaved as a signal peptide. MIR domains follow at residues 33 to 87 (AELV…IRGG), 95 to 150 (GSPV…VRCS), and 151 to 205 (GQHW…AMEG). Residue Ser-215 is modified to Phosphoserine. Residues 218 to 221 (HDEL) carry the Prevents secretion from ER motif.

Part of a large chaperone multiprotein complex comprising CABP1, DNAJB11, HSP90B1, HSPA5, HYOU, PDIA2, PDIA4, PPIB, SDF2L1, UGGT1 and very small amounts of ERP29, but not, or at very low levels, CALR nor CANX. In terms of tissue distribution, ubiquitously expressed with high expression in testis, moderate expression in the pancreas, spleen, prostate, small intestine and colon. Very low expression is seen in brain and skeletal muscle.

The protein resides in the endoplasmic reticulum lumen. This is Stromal cell-derived factor 2-like protein 1 (SDF2L1) from Homo sapiens (Human).